The sequence spans 394 residues: Probable aspartate/prephenate aminotransferase (394 aa).

3 residues coordinate L-aspartate: Gly-40, Trp-126, and Asn-176. N6-(pyridoxal phosphate)lysine is present on Lys-239. Arg-370 serves as a coordination point for L-aspartate.

This sequence belongs to the class-I pyridoxal-phosphate-dependent aminotransferase family. In terms of assembly, homodimer. The cofactor is pyridoxal 5'-phosphate.

Its subcellular location is the cytoplasm. The enzyme catalyses L-aspartate + 2-oxoglutarate = oxaloacetate + L-glutamate. The catalysed reaction is L-arogenate + oxaloacetate = prephenate + L-aspartate. In terms of biological role, catalyzes the reversible conversion of aspartate and 2-oxoglutarate to glutamate and oxaloacetate. Can also transaminate prephenate in the presence of aspartate. In Aquifex aeolicus (strain VF5), this protein is Probable aspartate/prephenate aminotransferase (aspC).